The primary structure comprises 66 residues: Beta-toxin Cbo3 (66 aa).

The LCN-type CS-alpha/beta domain occupies 1 to 66 (KEGYIVNYHD…VWPLPKKTCN (66 aa)). 4 disulfide bridges follow: Cys12-Cys65, Cys16-Cys41, Cys25-Cys46, and Cys29-Cys48. An Asparagine amide modification is found at Asn66.

Belongs to the long (4 C-C) scorpion toxin superfamily. Sodium channel inhibitor family. Beta subfamily. In terms of tissue distribution, expressed by the venom gland.

The protein resides in the secreted. Its function is as follows. Beta toxins bind voltage-independently at site-4 of sodium channels and shift the voltage of activation toward more negative potentials thereby affecting sodium channel activation and promoting spontaneous and repetitive firing. A mixture of Cbo2 and Cbo3 is weakly active on the human voltage-gated sodium channels Nav1.4/SCN4A and Nav1.6/SCN8A when tested at 200 nM. In vivo, is toxic to mice when intraperitoneally injected. In Centruroides bonito (Scorpion), this protein is Beta-toxin Cbo3.